The following is a 366-amino-acid chain: GTP cyclohydrolase 1 type 2 homolog (366 aa).

A divalent metal cation contacts are provided by His-64, His-65, Asp-102, His-326, and Glu-329.

The protein belongs to the GTP cyclohydrolase I type 2/NIF3 family. In terms of assembly, homohexamer.

This chain is GTP cyclohydrolase 1 type 2 homolog, found in Staphylococcus epidermidis (strain ATCC 35984 / DSM 28319 / BCRC 17069 / CCUG 31568 / BM 3577 / RP62A).